A 90-amino-acid polypeptide reads, in one-letter code: Small ribosomal subunit protein bS20 (90 aa).

Belongs to the bacterial ribosomal protein bS20 family.

Functionally, binds directly to 16S ribosomal RNA. This Francisella tularensis subsp. holarctica (strain FTNF002-00 / FTA) protein is Small ribosomal subunit protein bS20.